Here is a 165-residue protein sequence, read N- to C-terminus: Pro-MCH (165 aa).

A signal peptide spans 1–21 (MAKMTLSSYMLMLAFSLFSQG). Positions 66-89 (YKNDESGFMNDDDNKNSKNTGSKQ) are disordered. The residue at position 143 (isoleucine 143) is an Isoleucine amide. A disulfide bridge links cysteine 153 with cysteine 162.

This sequence belongs to the MCH family. Pro-MCH is processed differentially in the brain and in peripheral organs producing two neuropeptides; NEI and MCH. A third peptide, NGE, may also be produced. Preferential processing in neurons by prohormone convertase 2 (PC2) generates NEI. MCH is generated in neurons of the lateral hypothalmic area by several prohormone convertases including PC1/3, PC2 and PC5/6. As to expression, predominantly expressed in hypothalamus. Also found in heart, intestine, spleen and testis (spermatogonia, early spermatocytes and Sertoli cells). In brain only mature MCH and NEI peptides are present. In peripheral tissues a large product, encompassing the NEI and MCH domains of the precursor, is found predominantly.

Its subcellular location is the secreted. Its function is as follows. MCH may act as a neurotransmitter or neuromodulator in a broad array of neuronal functions directed toward the regulation of goal-directed behavior, such as food intake, and general arousal. In Mus musculus (Mouse), this protein is Pro-MCH (Pmch).